We begin with the raw amino-acid sequence, 323 residues long: Aldo-keto reductase family 1 member C2 (323 aa).

Residues 20–24 (GFGTY) and D50 each bind NADP(+). A substrate-binding site is contributed by Y24. The active-site Proton donor is Y55. Substrate is bound at residue H117. NADP(+)-binding positions include 166–167 (SN), Q190, and 216–222 (YSALGSH). Substrate contacts are provided by H222 and W227. NADP(+) is bound at residue 270-280 (KSYNEQRIRQN).

The protein belongs to the aldo/keto reductase family. In terms of tissue distribution, expressed in fetal testes. Expressed in fetal and adult adrenal glands.

The protein localises to the cytoplasm. Its subcellular location is the cytosol. It carries out the reaction a 3alpha-hydroxysteroid + NADP(+) = a 3-oxosteroid + NADPH + H(+). The enzyme catalyses a 3alpha-hydroxysteroid + NAD(+) = a 3-oxosteroid + NADH + H(+). The catalysed reaction is 5alpha-androstane-3alpha,17beta-diol + NADP(+) = 17beta-hydroxy-5alpha-androstan-3-one + NADPH + H(+). It catalyses the reaction 5alpha-androstane-3alpha,17beta-diol + NAD(+) = 17beta-hydroxy-5alpha-androstan-3-one + NADH + H(+). It carries out the reaction 5alpha-androstane-3alpha,17beta-diol + NAD(+) = androsterone + NADH + H(+). The enzyme catalyses 17beta-estradiol + NADP(+) = estrone + NADPH + H(+). The catalysed reaction is 17beta-estradiol + NAD(+) = estrone + NADH + H(+). It catalyses the reaction (20S)-hydroxypregn-4-en-3-one + NADP(+) = progesterone + NADPH + H(+). It carries out the reaction (20S)-hydroxypregn-4-en-3-one + NAD(+) = progesterone + NADH + H(+). The enzyme catalyses androsterone + NADP(+) = 5alpha-androstan-3,17-dione + NADPH + H(+). The catalysed reaction is (3beta,5alpha,17beta)-3-hydroxy-androstan-17-yl sulfate + NADP(+) = 5alpha-dihydrotestosterone sulfate + NADPH + H(+). It catalyses the reaction (1R,2R)-1,2-dihydrobenzene-1,2-diol + NADP(+) = catechol + NADPH + H(+). It carries out the reaction (S)-indan-1-ol + NAD(+) = indan-1-one + NADH + H(+). The enzyme catalyses (S)-indan-1-ol + NADP(+) = indan-1-one + NADPH + H(+). The protein operates within steroid metabolism. With respect to regulation, inhibited by hexestrol with an IC(50) of 2.8 uM, 1,10-phenanthroline with an IC(50) of 2100 uM, 1,7-phenanthroline with an IC(50) of 1500 uM, flufenamic acid with an IC(50) of 0.9 uM, indomethacin with an IC(50) of 75 uM, ibuprofen with an IC(50) of 6.9 uM, lithocholic acid with an IC(50) of 0.07 uM, ursodeoxycholic acid with an IC(50) of 0.08 uM and chenodeoxycholic acid with an IC(50) of 0.13 uM. The oxidation reaction is inhibited by low micromolar concentrations of NADPH. Cytosolic aldo-keto reductase that catalyzes the NADH and NADPH-dependent reduction of ketosteroids to hydroxysteroids. Most probably acts as a reductase in vivo since the oxidase activity measured in vitro is inhibited by physiological concentrations of NADPH. Displays a broad positional specificity acting on positions 3, 17 and 20 of steroids and regulates the metabolism of hormones like estrogens and androgens. Works in concert with the 5-alpha/5-beta-steroid reductases to convert steroid hormones into the 3-alpha/5-alpha and 3-alpha/5-beta-tetrahydrosteroids. Catalyzes the inactivation of the most potent androgen 5-alpha-dihydrotestosterone (5-alpha-DHT) to 5-alpha-androstane-3-alpha,17-beta-diol (3-alpha-diol). Also specifically able to produce 17beta-hydroxy-5alpha-androstan-3-one/5alphaDHT. May also reduce conjugated steroids such as 5alpha-dihydrotestosterone sulfate. Displays affinity for bile acids. This Homo sapiens (Human) protein is Aldo-keto reductase family 1 member C2 (AKR1C2).